Consider the following 216-residue polypeptide: uncharacterized protein (216 aa).

Positions 56 and 77 each coordinate S-adenosyl-L-methionine.

Belongs to the methyltransferase superfamily. YrrT family.

Functionally, could be a S-adenosyl-L-methionine-dependent methyltransferase. This is an uncharacterized protein from Alkaliphilus oremlandii (strain OhILAs) (Clostridium oremlandii (strain OhILAs)).